The primary structure comprises 253 residues: UPF0280 protein MA_1715 (253 aa).

This sequence belongs to the UPF0280 family.

This is UPF0280 protein MA_1715 from Methanosarcina acetivorans (strain ATCC 35395 / DSM 2834 / JCM 12185 / C2A).